The chain runs to 264 residues: S-adenosylmethionine decarboxylase proenzyme (264 aa).

Catalysis depends on S112, which acts as the Schiff-base intermediate with substrate; via pyruvic acid. S112 carries the post-translational modification Pyruvic acid (Ser); by autocatalysis. Catalysis depends on H117, which acts as the Proton acceptor; for processing activity. C140 (proton donor; for catalytic activity) is an active-site residue.

The protein belongs to the prokaryotic AdoMetDC family. Type 2 subfamily. As to quaternary structure, heterooctamer of four alpha and four beta chains arranged as a tetramer of alpha/beta heterodimers. The cofactor is pyruvate. In terms of processing, is synthesized initially as an inactive proenzyme. Formation of the active enzyme involves a self-maturation process in which the active site pyruvoyl group is generated from an internal serine residue via an autocatalytic post-translational modification. Two non-identical subunits are generated from the proenzyme in this reaction, and the pyruvate is formed at the N-terminus of the alpha chain, which is derived from the carboxyl end of the proenzyme. The post-translation cleavage follows an unusual pathway, termed non-hydrolytic serinolysis, in which the side chain hydroxyl group of the serine supplies its oxygen atom to form the C-terminus of the beta chain, while the remainder of the serine residue undergoes an oxidative deamination to produce ammonia and the pyruvoyl group blocking the N-terminus of the alpha chain.

It catalyses the reaction S-adenosyl-L-methionine + H(+) = S-adenosyl 3-(methylsulfanyl)propylamine + CO2. It functions in the pathway amine and polyamine biosynthesis; S-adenosylmethioninamine biosynthesis; S-adenosylmethioninamine from S-adenosyl-L-methionine: step 1/1. Catalyzes the decarboxylation of S-adenosylmethionine to S-adenosylmethioninamine (dcAdoMet), the propylamine donor required for the synthesis of the polyamines spermine and spermidine from the diamine putrescine. This chain is S-adenosylmethionine decarboxylase proenzyme, found in Photorhabdus laumondii subsp. laumondii (strain DSM 15139 / CIP 105565 / TT01) (Photorhabdus luminescens subsp. laumondii).